The following is a 793-amino-acid chain: Probable phosphoketolase (793 aa).

It belongs to the XFP family. Requires thiamine diphosphate as cofactor.

This Rhodopirellula baltica (strain DSM 10527 / NCIMB 13988 / SH1) protein is Probable phosphoketolase.